The following is a 434-amino-acid chain: Transcription factor AP-2-epsilon (434 aa).

The tract at residues 30–123 (LNQGPYSSAP…GLSLDPRRDY (94 aa)) is disordered. The segment covering 52–62 (PYFPPPYPQPP) has biased composition (pro residues). The short motif at 53-58 (YFPPPY) is the PPxY motif element. The span at 81 to 97 (SSINSIHHQHQQPSWHT) shows a compositional bias: polar residues. An H-S-H (helix-span-helix), dimerization region spans residues 278 to 408 (RRKAANVTLL…YLLESLKGMD (131 aa)). Positions 415-434 (TGNGHSAAESKSEKDIKHRK) are disordered. Over residues 422-434 (AESKSEKDIKHRK) the composition is skewed to basic and acidic residues.

This sequence belongs to the AP-2 family. Binds DNA as a dimer. Can form homodimers or heterodimers with other AP-2 family members.

It localises to the nucleus. Sequence-specific DNA-binding protein that interacts with inducible viral and cellular enhancer elements to regulate transcription of selected genes. AP-2 factors bind to the consensus sequence 5'-GCCNNNGGC-3' and activate genes involved in a large spectrum of important biological functions. This chain is Transcription factor AP-2-epsilon, found in Xenopus laevis (African clawed frog).